The sequence spans 132 residues: Acid shock protein (132 aa).

A signal peptide spans 1-21 (MKKVLALIVAATMGLSSVAFA). Residues 22–69 (AETTAAATAAPAATSTTAAPAVEKAAPAKATHHKKHKATKQTTEQKAQ) constitute a propeptide that is removed on maturation. Low complexity predominate over residues 30–50 (AAPAATSTTAAPAVEKAAPAK). The disordered stretch occupies residues 30 to 132 (AAPAATSTTA…AKKSATAPAA (103 aa)). A compositionally biased stretch (basic residues) spans 51–60 (ATHHKKHKAT). The span at 61–99 (KQTTEQKAQAAKKAVKKAPAQKAQAAKKAVKKAPVQKAQ) shows a compositional bias: low complexity. Residues 100 to 124 (AAKKHVKKAPAQKAQAAKKHHKTAK) show a composition bias toward basic residues.

This sequence belongs to the Asr family. Post-translationally, proteolytic processing gives rise to the active protein.

It is found in the periplasm. Required for growth and/or survival at acidic conditions. The chain is Acid shock protein from Yersinia enterocolitica serotype O:8 / biotype 1B (strain NCTC 13174 / 8081).